The chain runs to 861 residues: E3 ubiquitin-protein ligase HECTD3 (861 aa).

At alanine 2 the chain carries N-acetylalanine. Serine 12 is modified (phosphoserine). One can recognise a DOC domain in the interval 219-397 (DEDLIHFLYD…TSLVRYPRLE (179 aa)). One can recognise an HECT domain in the interval 512-857 (YEKPLDYRWP…NCVAIDTDMS (346 aa)). The Glycyl thioester intermediate role is filled by cysteine 823.

In terms of assembly, interacts with TRIOBP. Interacts with STX8.

Its subcellular location is the cytoplasm. The protein resides in the perinuclear region. It catalyses the reaction S-ubiquitinyl-[E2 ubiquitin-conjugating enzyme]-L-cysteine + [acceptor protein]-L-lysine = [E2 ubiquitin-conjugating enzyme]-L-cysteine + N(6)-ubiquitinyl-[acceptor protein]-L-lysine.. Its pathway is protein modification; protein ubiquitination. E3 ubiquitin ligases accepts ubiquitin from an E2 ubiquitin-conjugating enzyme in the form of a thioester and then directly transfers the ubiquitin to targeted substrates. Mediates ubiquitination of TRIOBP and its subsequent proteasomal degradation, thus facilitating cell cycle progression by regulating the turn-over of TRIOBP. Mediates also ubiquitination of STX8. This is E3 ubiquitin-protein ligase HECTD3 (HECTD3) from Homo sapiens (Human).